Consider the following 115-residue polypeptide: Na(+)/H(+) antiporter subunit C1 (115 aa).

3 helical membrane-spanning segments follow: residues 1 to 21, 28 to 48, and 72 to 92; these read MEIL…YLIL, IIIG…TMGG, and LILT…VLAF.

The protein belongs to the CPA3 antiporters (TC 2.A.63) subunit C family. In terms of assembly, may form a heterooligomeric complex that consists of seven subunits: mnhA1, mnhB1, mnhC1, mnhD1, mnhE1, mnhF1 and mnhG1.

It localises to the cell membrane. Mnh complex is a Na(+)/H(+) antiporter involved in Na(+) excretion. This Staphylococcus saprophyticus subsp. saprophyticus (strain ATCC 15305 / DSM 20229 / NCIMB 8711 / NCTC 7292 / S-41) protein is Na(+)/H(+) antiporter subunit C1 (mnhC1).